Here is a 1558-residue protein sequence, read N- to C-terminus: MEDGGLGMDAELGADSARRKMEAAGEALEIVPLEMYDSARAKIAANLRWLFAKAFGIDHIPEDLRDPFYRDQYEQEHIKPPVIRLLLSCELYCRVCALILKGDQVASLQSHQSVIQALSRKGIYVMEDDDTPVTDSDLTCQPIKMSSHIPMIDALMMAYTVEMISIEKVVSCVKRFSTFSASKELPFDLEDAMIFWINKVNLKMREITEKEHKSKQHLLESPSHQKSPSKWYWKLVPVRYRRDHASGRQLPYFQMLEDLIRDVCDGAALLTVVHYYCPELMKLDDICLKEVTSIADSLYNIQLLKEFANEYLNKSFYLTLEDLLYAPPVLKHNVMVFIAELFWWFEIVKPEFVQPRDVQEFKDARAVSQPKSARPTVPISNATKRSFLVSPGAADPVLPVQNSPEVCNSNKGSSGFSPSHPLLPLRQRQKKAQPAEESTACRNRSNSLTQEGHPRGSVAWSDKRQRPLSQLNRYVLHSATDSDADLASGDSVSLTCSISEDSLASTVTPKHQSHPGQGSVRRINGHSLLGNVNMDEEEELVAIARADPSKNDITLTNSEDTERQGVTPGAKSIWGRQEDASSDSRTASFFLEPLMPAVLRPAKEKSISLNKEEESGEGRQRGSTRRVAGAESAASSTRRRPPQTLNRTFTPNTSSEFETTIEPKSSEFVPPAPGQMQAFRPLVTSSVEPSSAERSPGFYLHSSVTEEKRPVQAWDAHPGTSDIETVETIEEQDAELTKELHPDKKQHFEEEVESAKLREDMNVKEHEDKDGGSRCSSPGQQSQVSSVASGSIRMTSFAERKMQRFGSNQDIRSSTSSSQRTTPDGSESCPLPLTSWRMKRDQSPTPQNKDNANMLASELVQLHMQLEEKRRAIESQKKKMEILTARQRLKLGKAAFLHIVKKGKSDTLPQPTKSEFYLKEGQKLNEEKEVSSKDDTCVDALRDRSKEAEEPEKASCEWAGGGTVSSSPLDVEEEVDLNECNRSIELLNEAIGSIQQQMMQLSLQQEMLMKQNIQSPTSATSPLANDQINTSEPRVRASIHFVEPSGSPVVRKPPKLSSARPRSKPSELLLGKEHSKGQKSSTPTPTDSPSARSIQGGRTPKAESQDFVQSSVRSESFNKDKGNHKGTTFHLNDEANMRMVSREPSSVALGVTFEESMSLRDTETTFDDGTARDNLISSEDISRGKANLIEVDLSDLAANTDDESTNALDVTADGSDGEKKSGMGFFFKDEQKAEDELAKKRAAFLLKQQRKAEEARLRKQQLEAESEQKRDETRRKAEEERIRKEEEKARRELIKQEYLRKKQLELCEEQEQPQPKPKTKPKKQRLKSVVKEEPSIDPLPKCPAANENLISAQSGSSLSLASVATTEPDSVNSGGAGSQRGESVESFPGLSRNSSRTTERDWDNGSTASSITSTSMAEYTGPKLFKEPSAKSNKPIIHNAISHCCLAGKVNEPQKNSILEELERCESNHLMILFRDSGCQFRALYSYFPDTEEIHKLTGTGPKSITKKMIDKLYKYSSDRKQFTVIPAKTVSVSVDALTIHNHLWQAKRPAGPKKSAK.

The Calponin-homology (CH) domain maps to 231 to 346 (WYWKLVPVRY…FIAELFWWFE (116 aa)). Composition is skewed to polar residues over residues 400–417 (VQNSPEVCNSNKGSSGFS), 440–450 (ACRNRSNSLTQ), and 504–516 (ASTVTPKHQSHPG). Disordered regions lie at residues 400 to 464 (VQNS…SDKR), 504 to 523 (ASTVTPKHQSHPGQGSVRRI), 551 to 585 (NDITLTNSEDTERQGVTPGAKSIWGRQEDASSDSR), 602 to 675 (AKEK…APGQ), 737 to 790 (TKEL…VASG), 803 to 850 (QRFG…QNKD), and 943 to 968 (DRSKEAEEPEKASCEWAGGGTVSSSP). Over residues 602-620 (AKEKSISLNKEEESGEGRQ) the composition is skewed to basic and acidic residues. Over residues 643–658 (QTLNRTFTPNTSSEFE) the composition is skewed to polar residues. Over residues 737–772 (TKELHPDKKQHFEEEVESAKLREDMNVKEHEDKDGG) the composition is skewed to basic and acidic residues. Composition is skewed to low complexity over residues 776 to 790 (SSPGQQSQVSSVASG) and 812 to 822 (RSSTSSSQRTT). Residues 849–887 (KDNANMLASELVQLHMQLEEKRRAIESQKKKMEILTARQ) are a coiled coil. Basic and acidic residues predominate over residues 943–955 (DRSKEAEEPEKAS). Positions 971–1004 (VEEEVDLNECNRSIELLNEAIGSIQQQMMQLSLQ) form a coiled coil. Disordered regions lie at residues 1041–1131 (FVEP…TFHL), 1257–1293 (LRKQQLEAESEQKRDETRRKAEEERIRKEEEKARREL), 1305–1344 (ELCEEQEQPQPKPKTKPKKQRLKSVVKEEPSIDPLPKCPA), and 1360–1414 (LASV…ITST). Low complexity predominate over residues 1080–1090 (SSTPTPTDSPS). Polar residues predominate over residues 1106 to 1115 (DFVQSSVRSE). The stretch at 1243–1303 (AFLLKQQRKA…IKQEYLRKKQ (61 aa)) forms a coiled coil. Basic residues predominate over residues 1317–1328 (PKTKPKKQRLKS). Positions 1421–1555 (GPKLFKEPSA…QAKRPAGPKK (135 aa)) constitute a CKK domain.

Belongs to the CAMSAP1 family.

Its subcellular location is the cytoplasm. It localises to the cytoskeleton. Functionally, key microtubule-organizing protein that specifically binds the minus-end of non-centrosomal microtubules and regulates their dynamics and organization. Specifically recognizes growing microtubule minus-ends and stabilizes microtubules. Acts on free microtubule minus-ends that are not capped by microtubule-nucleating proteins or other factors and protects microtubule minus-ends from depolymerization. In contrast to camsap2 and camsap3, tracks along the growing tips of minus-end microtubules without significantly affecting the polymerization rate: binds at the very tip of the microtubules minus-end and acts as a minus-end tracking protein (-TIP) that dissociates from microtubules after allowing tubulin incorporation. Through interaction with spectrin may regulate neurite outgrowth. This Danio rerio (Zebrafish) protein is Calmodulin-regulated spectrin-associated protein 1-B (camsap1b).